Here is a 37-residue protein sequence, read N- to C-terminus: Cytochrome b6-f complex subunit 5 (37 aa).

The helical transmembrane segment at 5–25 threads the bilayer; it reads LLSGIVLGLIPITLAGLFVTA.

Belongs to the PetG family. The 4 large subunits of the cytochrome b6-f complex are cytochrome b6, subunit IV (17 kDa polypeptide, PetD), cytochrome f and the Rieske protein, while the 4 small subunits are PetG, PetL, PetM and PetN. The complex functions as a dimer.

Its subcellular location is the plastid. It is found in the chloroplast thylakoid membrane. Component of the cytochrome b6-f complex, which mediates electron transfer between photosystem II (PSII) and photosystem I (PSI), cyclic electron flow around PSI, and state transitions. PetG is required for either the stability or assembly of the cytochrome b6-f complex. In Chara vulgaris (Common stonewort), this protein is Cytochrome b6-f complex subunit 5.